The chain runs to 383 residues: Lipid-A-disaccharide synthase (383 aa).

This sequence belongs to the LpxB family.

It carries out the reaction a lipid X + a UDP-2-N,3-O-bis[(3R)-3-hydroxyacyl]-alpha-D-glucosamine = a lipid A disaccharide + UDP + H(+). Its pathway is bacterial outer membrane biogenesis; LPS lipid A biosynthesis. Condensation of UDP-2,3-diacylglucosamine and 2,3-diacylglucosamine-1-phosphate to form lipid A disaccharide, a precursor of lipid A, a phosphorylated glycolipid that anchors the lipopolysaccharide to the outer membrane of the cell. The sequence is that of Lipid-A-disaccharide synthase from Anaeromyxobacter sp. (strain K).